A 250-amino-acid polypeptide reads, in one-letter code: MSQAAETLDGWYSLHLFYAVDWASLRIVPKDERDALVTEFQSFLENTATVRSSKSGDQAIYNITGQKADLLLWFLRPEMKSLNHIENEFNKLRIADFLIPTYSYVSVIELSNYLAGKSDEDPYENPHIKARLYPELPHSDYICFYPMNKRRNETYNWYMLTMEERQKLMYDHGMIGRKYAGKIKQFITGSVGFDDFEWGVTLFSDDVLQFKKIVYEMRFDETTARYGEFGSFFVGHLINTNEFDQFFAIS.

Fe-coproporphyrin III-binding positions include Arg131, 145 to 149 (YPMNK), His172, and Gln185. Tyr145 is a catalytic residue.

Belongs to the ChdC family. Type 1 subfamily. The cofactor is Fe-coproporphyrin III.

It catalyses the reaction Fe-coproporphyrin III + 2 H2O2 + 2 H(+) = heme b + 2 CO2 + 4 H2O. The catalysed reaction is Fe-coproporphyrin III + H2O2 + H(+) = harderoheme III + CO2 + 2 H2O. It carries out the reaction harderoheme III + H2O2 + H(+) = heme b + CO2 + 2 H2O. It functions in the pathway porphyrin-containing compound metabolism; protoheme biosynthesis. Its function is as follows. Involved in coproporphyrin-dependent heme b biosynthesis. Catalyzes the decarboxylation of Fe-coproporphyrin III (coproheme) to heme b (protoheme IX), the last step of the pathway. The reaction occurs in a stepwise manner with a three-propionate intermediate. This Staphylococcus aureus (strain Mu50 / ATCC 700699) protein is Coproheme decarboxylase.